The following is a 313-amino-acid chain: Beta-lactamase FAR-1 (313 aa).

Positions 1–28 (MPGVDISFLKKSGRRTMAAAAVIALLGG) are cleaved as a signal peptide. The N-palmitoyl cysteine moiety is linked to residue Cys-29. Cys-29 is lipidated: S-diacylglycerol cysteine. The active-site Acyl-ester intermediate is the Ser-94. Ser-154 lines the substrate pocket. Residue Glu-190 is the Proton acceptor of the active site. Substrate is bound at residue 258–260 (KTG).

It belongs to the class-A beta-lactamase family.

It is found in the cell membrane. It catalyses the reaction a beta-lactam + H2O = a substituted beta-amino acid. Its activity is regulated as follows. Inhibited by clavulanic acid, and at a low level by tazobactam and sulbactam. In terms of biological role, confers high levels of resistance to amoxicillin, benzylpenicillin, piperacillin, ticarcillin and cephalothin. Also hydrolyzes aztreonam at a low level. Not active against ceftazidime, cefotaxime and imipenem. This Nocardia farcinica (strain IFM 10152) protein is Beta-lactamase FAR-1 (bla).